A 360-amino-acid polypeptide reads, in one-letter code: Squamosa promoter-binding-like protein 7 (360 aa).

The span at 74 to 89 (AQGSGGGGGGGGGGSA) shows a compositional bias: gly residues. The tract at residues 74–98 (AQGSGGGGGGGGGGSADQGKRKEKA) is disordered. The segment at 105–182 (VPRCQVEGCD…AGHNERRRRS (78 aa)) adopts an SBP-type zinc-finger fold. Zn(2+) is bound by residues C108, C113, C130, H133, C149, C152, H156, and C168. Residues 165–181 (KKSCRRRLAGHNERRRR) carry the Bipartite nuclear localization signal motif. Residues 172 to 182 (LAGHNERRRRS) are compositionally biased toward basic residues. Disordered regions lie at residues 172-196 (LAGHNERRRRSNASEAMARGSAHPH), 261-306 (FFSD…HENQ), and 318-360 (TTAA…ARVV).

As to expression, expressed in young panicles.

The protein localises to the nucleus. In terms of biological role, trans-acting factor that binds specifically to the consensus nucleotide sequence 5'-TNCGTACAA-3'. May be involved in panicle development. In Oryza sativa subsp. japonica (Rice), this protein is Squamosa promoter-binding-like protein 7 (SPL7).